Reading from the N-terminus, the 708-residue chain is MFPPSYDAFQGVTAIGWACANMAHHFGISLVMTQPITYLLQLQQLAKQGQTRFGCWLRGDAQWQHHLLKTLVPHFAEQPILMLGQTELEGVTCVDYRQGQQWLGRECQLLIVDLTQGWDANSFNAVLGTLVGGGLLLVVGEPTTLNHCARVWLERACHRLLVITPQTVPALPNSDSVTRTNTEQTYTEQRLAIDSIIKVVTGHRKRPLVLTADRGRGKTSALGLAAAELMSSRSMHIVVTAPTLAAVEPLFVHAQRTLPQAHRQRGEVQTAQSSLRFMAPDELLRTQPESDLLLVDEAAALPLPFLKRWVERYHRAVFSSTIHGYEGCGRGFSLKFQSWLQVQRPQMRSLHLEQPIRWAAGDALEQWQNQVFLLQSELPEVALEQAREPLSFSLFSQPECVEQPERLAQVFALLVNAHYQTSPNDLFALLQDEAMTLFVAYQGEVCVGCVLAVREGELDAPTIEAIQLGTRRPKGHLTPVTLANQLGISQAARQSCWRILRIAVHPDCQRQGIGSQLLTHFIAQHHADYYATSFGVSEDLLPFWLANHFVPIKLGSHRDQASGCYSLLMVRGEHLDWLEQAKQQFSAHWIFELSDSLQALEPQIIQQLLPSTVALPQPLIPLELIERYARGGANYESVAVWLYAWLLATAPSLESLSPLLISKILQRKSWAACAEQFQLSGKRQVEQAVRTEILALLVNLQCKYTLPI.

ATP-binding positions include Gln189, 215–224, and Arg357; that span reads GRGKTSALGL. An N-acetyltransferase domain is found at 398 to 574; that stretch reads PECVEQPERL…YSLLMVRGEH (177 aa). Acetyl-CoA contacts are provided by residues 502–504 and 509–515; these read IAV and QRQGIGS.

Belongs to the RNA cytidine acetyltransferase family. TmcA subfamily.

The protein localises to the cytoplasm. It catalyses the reaction cytidine(34) in elongator tRNA(Met) + acetyl-CoA + ATP + H2O = N(4)-acetylcytidine(34) in elongator tRNA(Met) + ADP + phosphate + CoA + H(+). Functionally, catalyzes the formation of N(4)-acetylcytidine (ac(4)C) at the wobble position of tRNA(Met), by using acetyl-CoA as an acetyl donor and ATP (or GTP). This is tRNA(Met) cytidine acetyltransferase TmcA from Vibrio cholerae serotype O1 (strain ATCC 39315 / El Tor Inaba N16961).